The sequence spans 259 residues: Methanethiol S-methyltransferase 2 (259 aa).

5 helical membrane-spanning segments follow: residues 5–25 (LAIL…FLYA), 46–66 (LGEA…QHSV), 88–108 (TYVL…RPIP), 115–135 (SGIA…IAFA), and 182–202 (FLLA…FALA).

It belongs to the nurim family.

It is found in the membrane. It carries out the reaction methanethiol + S-adenosyl-L-methionine = dimethyl sulfide + S-adenosyl-L-homocysteine + H(+). Functionally, catalyzes the methylation of methanethiol (MeSH) to yield dimethylsulphide (DMS). The polypeptide is Methanethiol S-methyltransferase 2 (Bradyrhizobium diazoefficiens (strain JCM 10833 / BCRC 13528 / IAM 13628 / NBRC 14792 / USDA 110)).